The following is a 297-amino-acid chain: Vacuolar protein sorting-associated protein 26 (297 aa).

It belongs to the VPS26 family. In terms of assembly, component of the retromer complex, composed of VPS26, VPS29 and VPS35. As part of the retromer complex, interacts with the sorting receptor SORTLR/sortilin. Interacts with GTPase RAB7.

Functionally, plays a role in vesicular protein sorting. Component of the membrane-associated retromer complex which is essential in endosome-to-Golgi retrograde transport. The chain is Vacuolar protein sorting-associated protein 26 from Plasmodium falciparum (isolate 3D7).